A 216-amino-acid polypeptide reads, in one-letter code: Probable transaldolase (216 aa).

The active-site Schiff-base intermediate with substrate is Lys-83.

This sequence belongs to the transaldolase family. Type 3B subfamily.

The protein resides in the cytoplasm. It carries out the reaction D-sedoheptulose 7-phosphate + D-glyceraldehyde 3-phosphate = D-erythrose 4-phosphate + beta-D-fructose 6-phosphate. It participates in carbohydrate degradation; pentose phosphate pathway; D-glyceraldehyde 3-phosphate and beta-D-fructose 6-phosphate from D-ribose 5-phosphate and D-xylulose 5-phosphate (non-oxidative stage): step 2/3. Transaldolase is important for the balance of metabolites in the pentose-phosphate pathway. The protein is Probable transaldolase of Desulforamulus reducens (strain ATCC BAA-1160 / DSM 100696 / MI-1) (Desulfotomaculum reducens).